Reading from the N-terminus, the 256-residue chain is MIKRVNKLVLGISFLFLIISIFAGCGTGKEAEIKKSFEKTLSMYPIKNLEDLYDKEGYRDDQFDKNDKGTWIVRSSMSIQSNGKDMNIKGMVLYMNRNTRTTNGYYYVDVIEREDKGIHRDNEKRYPVKMVDNKIIPTKEIKDEKIKKEIENFKFFVQYGDFKDLSKYKDGDISYNPEVPSYSAKYQLTNDDYNVKQLRKRYNIPTNKAPKLLLKGTGNLKGSSIGYKKIEFTFVEKKGENIYFSDGLHFNPSEDK.

A signal peptide spans 1–24 (MIKRVNKLVLGISFLFLIISIFAG). The N-palmitoyl cysteine moiety is linked to residue C25. C25 is lipidated: S-diacylglycerol cysteine.

Belongs to the staphylococcal tandem lipoprotein family.

It is found in the cell membrane. This is an uncharacterized protein from Staphylococcus aureus (strain Mu50 / ATCC 700699).